The sequence spans 344 residues: MIDRYSLLRPWLFCLDPEQAHNLTLKNLDRAQRFGLLQRLVSKPIADPQNLCGIEFPNPVGLAAGLDKDGKHIDSLAALGFGFLEIGTVTPRPQAGNPKPRMFRLPQAEAIINRMGFNNDGVEACVSRVRQSIFWQRGGVLGLNIGKNAITPIEDAASDYIAAMEAVYEIATYITVNISSPNTQNLRALQGEDMLRSLLRSLDDARKRLSDRYGVRKPLFLKIAPDLDQNDIHLIADLLMEFNIDAVIATNTTISREAVTGMQYGEETGGLSGAPVRIASNIVIRALKARLGVQLPIIGVGGILSGADAREKIMAGASLVQLYSGLIYKGPDLVSECAKALRQS.

FMN is bound by residues 64-68 (AGLDK) and Thr-88. Lys-68 contributes to the substrate binding site. 113 to 117 (NRMGF) contributes to the substrate binding site. The FMN site is built by Asn-144 and Asn-177. Asn-177 is a binding site for substrate. Ser-180 acts as the Nucleophile in catalysis. Asn-182 contacts substrate. FMN is bound by residues Lys-222 and Thr-250. 251-252 (NT) is a substrate binding site. FMN-binding positions include Gly-273, Gly-302, and 323-324 (YS).

This sequence belongs to the dihydroorotate dehydrogenase family. Type 2 subfamily. In terms of assembly, monomer. The cofactor is FMN.

The protein localises to the cell membrane. It catalyses the reaction (S)-dihydroorotate + a quinone = orotate + a quinol. It participates in pyrimidine metabolism; UMP biosynthesis via de novo pathway; orotate from (S)-dihydroorotate (quinone route): step 1/1. Functionally, catalyzes the conversion of dihydroorotate to orotate with quinone as electron acceptor. The protein is Dihydroorotate dehydrogenase (quinone) of Polynucleobacter asymbioticus (strain DSM 18221 / CIP 109841 / QLW-P1DMWA-1) (Polynucleobacter necessarius subsp. asymbioticus).